Consider the following 128-residue polypeptide: Ribonuclease P protein component (128 aa).

The protein belongs to the RnpA family. Consists of a catalytic RNA component (M1 or rnpB) and a protein subunit.

It catalyses the reaction Endonucleolytic cleavage of RNA, removing 5'-extranucleotides from tRNA precursor.. Functionally, RNaseP catalyzes the removal of the 5'-leader sequence from pre-tRNA to produce the mature 5'-terminus. It can also cleave other RNA substrates such as 4.5S RNA. The protein component plays an auxiliary but essential role in vivo by binding to the 5'-leader sequence and broadening the substrate specificity of the ribozyme. The chain is Ribonuclease P protein component from Prochlorococcus marinus (strain MIT 9303).